Here is a 236-residue protein sequence, read N- to C-terminus: Phosphoribosylaminoimidazole-succinocarboxamide synthase (236 aa).

It belongs to the SAICAR synthetase family.

It catalyses the reaction 5-amino-1-(5-phospho-D-ribosyl)imidazole-4-carboxylate + L-aspartate + ATP = (2S)-2-[5-amino-1-(5-phospho-beta-D-ribosyl)imidazole-4-carboxamido]succinate + ADP + phosphate + 2 H(+). It participates in purine metabolism; IMP biosynthesis via de novo pathway; 5-amino-1-(5-phospho-D-ribosyl)imidazole-4-carboxamide from 5-amino-1-(5-phospho-D-ribosyl)imidazole-4-carboxylate: step 1/2. This Akkermansia muciniphila (strain ATCC BAA-835 / DSM 22959 / JCM 33894 / BCRC 81048 / CCUG 64013 / CIP 107961 / Muc) protein is Phosphoribosylaminoimidazole-succinocarboxamide synthase.